Reading from the N-terminus, the 178-residue chain is Probable apo-citrate lyase phosphoribosyl-dephospho-CoA transferase (178 aa).

It belongs to the CitX family.

It carries out the reaction apo-[citrate lyase ACP] + 2'-(5''-triphospho-alpha-D-ribosyl)-3'-dephospho-CoA = holo-[citrate lyase ACP] + diphosphate. Transfers 2-(5''-triphosphoribosyl)-3'-dephosphocoenzyme-A on a serine residue to the apo-acyl carrier protein (gamma chain) of the citrate lyase to yield holo-acyl carrier protein. This is Probable apo-citrate lyase phosphoribosyl-dephospho-CoA transferase from Vibrio cholerae serotype O1 (strain ATCC 39541 / Classical Ogawa 395 / O395).